A 238-amino-acid chain; its full sequence is Envelope glycoprotein G (238 aa).

The signal sequence occupies residues 1–24 (MSQGAMRAVVPIIPFLLVLVGVSG). The Virion surface portion of the chain corresponds to 25–189 (VPTNVSSTTQ…SFLTASPALD (165 aa)). Residues Asn28 and Asn49 are each glycosylated (N-linked (GlcNAc...) asparagine; by host). Composition is skewed to polar residues over residues 28–42 (NVSSTTQPQLQTTGR) and 49–68 (NMTQTGTTDSPTAISLTTPD). Residues 28-171 (NVSSTTQPQL…LTSKGRPLVP (144 aa)) are disordered. Positions 78 to 88 (LEEEEEEEGAG) are enriched in acidic residues. Over residues 89–100 (DGEHLEGGDGTR) the composition is skewed to basic and acidic residues. A helical membrane pass occupies residues 190–210 (TLFVVSTVIHTLSFLCIGAMA). Over 211 to 238 (THLCGGWSRRGRRTHPSVRYVCLPSERG) the chain is Intravirion.

This sequence belongs to the alphaherpesvirinae glycoprotein G family.

It localises to the virion membrane. Its function is as follows. Chemokine-binding protein that inhibits neutrophils' chemotaxis. The protein is Envelope glycoprotein G (gG) of Human herpesvirus 1 (strain 17) (HHV-1).